Here is a 420-residue protein sequence, read N- to C-terminus: MKFTNLTAKEFGAFTDSMPYSHFTQTVGHYELKLAEGYETHLVGIKNNNNEVIAACLLTAVPVMKVFKYFYSNRGPVIDYENQELVHFFFNELSKYVKKHRCLYLHIDPYLPYQYLNHDGEITGNAGNDWFFDKMSNLGFEHTGFHKGFDPVLQIRYHSVLDLKDKTADDIIKNMDGLRKRNTKKVKKNGVKVRYLSEEELPIFRSFMEDTSESKAFADRDDKFYYNRLKYYKERVLVPLAYINFDEYIKELNEERDILNKDLNKALKDIEKRPENKKAHNKRDNLQQQLDANEQKIEEGKRLQEEHGNELPISAGFFFINPFEVVYYAGGTSNAFRHFAGSYAVQWEMINYALNHGIDRYNFYGVSGKFTEDAEDAGVVKFKKGYNAEIIEYVGDFIKPINKPVYAAYTALKKVKDRIF.

It belongs to the FemABX family. As to quaternary structure, homodimer. Interacts with FemB.

The protein resides in the cytoplasm. It carries out the reaction beta-D-GlcNAc-(1-&gt;4)-Mur2Ac(oyl-L-Ala-D-isoglutaminyl-L-Lys-(N(6)-Gly)-D-Ala-D-Ala)-di-trans,octa-cis-undecaprenyl diphosphate + 2 glycyl-tRNA(Gly) = MurNAc-L-Ala-D-isoglutaminyl-L-Lys-(N(6)-tri-Gly)-D-Ala-D-Ala-diphospho-di-trans,octa-cis-undecaprenyl-GlcNAc + 2 tRNA(Gly) + 2 H(+). Functionally, catalyzes the formation of the pentaglycine interpeptide bridge, which is characteristic of the S.aureus peptidoglycan. Adds glycines 2 and 3 of the pentaglycine bridge, using glycyl-tRNA(Gly) as donor. Involved in resistance to methicillin. In Staphylococcus aureus (strain MRSA252), this protein is Aminoacyltransferase FemA (femA).